Reading from the N-terminus, the 196-residue chain is Protein hunchback (196 aa).

Disordered regions lie at residues 16–56 (SHHH…SHTN), 63–82 (LKQQ…QQPM), and 156–196 (LTPP…KYMA). Over residues 17–29 (HHHHHHHAHHSHH) the composition is skewed to basic residues. Low complexity-rich tracts occupy residues 33 to 43 (SNSNASNSPHQ) and 65 to 80 (QQQQ…QQQQ). A compositionally biased stretch (basic and acidic residues) spans 177-196 (EPEKEHDLMSNSSEDMKYMA).

Belongs to the hunchback C2H2-type zinc-finger protein family.

It localises to the nucleus. In terms of biological role, gap class segmentation protein that controls development of head structures. The protein is Protein hunchback (hb) of Drosophila adunca (Fruit fly).